Consider the following 1538-residue polypeptide: Ferredoxin-dependent glutamate synthase (1538 aa).

The For GATase activity role is filled by Cys34. The region spanning 34–431 is the Glutamine amidotransferase type-2 domain; it reads CGVGFIADVN…PGQMISVDIF (398 aa). 1109–1166 lines the FMN pocket; it reads LSEVHQLLAENQLRDRVTLRVDGGLRTGSDIVLAAIMGAEEFGFGTVAMIATGCIMAR. 3 residues coordinate [3Fe-4S] cluster: Cys1162, Cys1168, and Cys1173.

This sequence belongs to the glutamate synthase family. In terms of assembly, monomer. [3Fe-4S] cluster is required as a cofactor. The cofactor is FAD. FMN serves as cofactor.

The protein localises to the plastid. It localises to the chloroplast stroma. It carries out the reaction 2 oxidized [2Fe-2S]-[ferredoxin] + 2 L-glutamate = L-glutamine + 2 reduced [2Fe-2S]-[ferredoxin] + 2-oxoglutarate + 2 H(+). It functions in the pathway amino-acid biosynthesis; L-glutamate biosynthesis via GLT pathway; L-glutamate from 2-oxoglutarate and L-glutamine (ferredoxin route): step 1/1. It participates in energy metabolism; nitrogen metabolism. In Pyropia yezoensis (Susabi-nori), this protein is Ferredoxin-dependent glutamate synthase (gltB).